A 77-amino-acid chain; its full sequence is Putative defensin-like protein 162 (77 aa).

An N-terminal signal peptide occupies residues 1-27 (MAKQLCSYMFISMFILSAFLALPSAEG). Cystine bridges form between Cys-34-Cys-77, Cys-44-Cys-63, Cys-49-Cys-71, and Cys-53-Cys-73.

It belongs to the DEFL family.

Its subcellular location is the secreted. This Arabidopsis thaliana (Mouse-ear cress) protein is Putative defensin-like protein 162 (LCR37).